We begin with the raw amino-acid sequence, 130 residues long: Small ribosomal subunit protein uS8 (130 aa).

The protein belongs to the universal ribosomal protein uS8 family. Part of the 30S ribosomal subunit.

Its function is as follows. One of the primary rRNA binding proteins, it binds directly to 16S rRNA central domain where it helps coordinate assembly of the platform of the 30S subunit. The sequence is that of Small ribosomal subunit protein uS8 from Pyrococcus horikoshii (strain ATCC 700860 / DSM 12428 / JCM 9974 / NBRC 100139 / OT-3).